A 324-amino-acid chain; its full sequence is Probable UDP-sugar transporter protein SLC35A4 (324 aa).

Residues 1–18 (MSVEDGGLPGLGGPGQAR) are Cytoplasmic-facing. The helical transmembrane segment at 19-39 (WTLMLLLSTATYGAHAPLLAL) threads the bilayer. The Lumenal segment spans residues 40–52 (CHVDGRVPFRPSS). Residues 53–73 (AVLLTELTKLLLCALSLLVGW) form a helical membrane-spanning segment. Topologically, residues 74–85 (QAWPPRTPPWRQ) are cytoplasmic. Residues 86-106 (AAPFALSALLYGANNNLVIHL) form a helical membrane-spanning segment. Topologically, residues 107-140 (QHYMDPSTYQVLSNLKIGSTALFYCLCLRRRLSA) are lumenal. The chain crosses the membrane as a helical span at residues 141–161 (RQGLALLLLMAAGACYAAGGL). Topologically, residues 162–177 (RDPGSPLPESPSTAAS) are cytoplasmic. The chain crosses the membrane as a helical span at residues 178–198 (GPVPLHVTAPGLLLLLLYCLI). Over 199–214 (SGLSSVYTELLLKRQR) the chain is Lumenal. A helical transmembrane segment spans residues 215 to 235 (LPLALQNLFLYTFGVLLNLGL). The Cytoplasmic portion of the chain corresponds to 236–248 (HAGGGPGPGLLEG). A helical membrane pass occupies residues 249–271 (FSGWAALVVLSQALNGLLMSAVM). Residues 272–279 (KHGSSITR) are Lumenal-facing. The chain crosses the membrane as a helical span at residues 280–300 (LFVVSCSLVVNAVLSAALLRL). The Cytoplasmic segment spans residues 301–324 (QLTAAFFLAALLIGLAVHLYYGSR).

Belongs to the nucleotide-sugar transporter family. SLC35A subfamily. In terms of assembly, found in a complex with SLC35A2 and SLC35A3.

It is found in the golgi apparatus membrane. The catalysed reaction is CDP-L-ribitol(in) + CDP(out) = CDP-L-ribitol(out) + CDP(in). Functionally, mediates the transport of CDP-ribitol. Does not exhibit CMP-sialic acid, UDP-galactose and UDP-N-acetylglucosamine transport activity. This chain is Probable UDP-sugar transporter protein SLC35A4, found in Sus scrofa (Pig).